The chain runs to 425 residues: Probable G-protein coupled receptor 63 (425 aa).

Residues 1-87 are Extracellular-facing; the sequence is MVVSGVLTAP…VFKSLNLAVQ (87 aa). N-linked (GlcNAc...) asparagine glycans are attached at residues N22, N34, and N68. Residues 88-112 form a helical membrane-spanning segment; that stretch reads IILSAIMIFILFVSFLGNLVVCLMV. The Cytoplasmic segment spans residues 113–123; sequence YQKAAMRSAIN. Residues 124–148 form a helical membrane-spanning segment; that stretch reads ILLASLAFADMLLAVLNMPFALVTI. The Extracellular segment spans residues 149–165; it reads LTTRWIFGKFFCRLSAM. A helical transmembrane segment spans residues 166-190; the sequence is FFWLFVIEGVAILLIISIDRFLIIV. The Cytoplasmic portion of the chain corresponds to 191-202; that stretch reads QRQDKLNPYRAK. The chain crosses the membrane as a helical span at residues 203–222; sequence VLIAVSWATAFSVAFPLAVG. Topologically, residues 223–247 are extracellular; that stretch reads NPDLQIPSRAPQCVFGYTTNSGYQA. Residues 248 to 272 traverse the membrane as a helical segment; that stretch reads YVILISLISFFIPFLVILYSFMGIL. Residues 273 to 321 are Cytoplasmic-facing; it reads NTLRHNALRIHSYPEGICLSQASKLGLMSLQRPFQMSIDMGFKTRAFTT. The helical transmembrane segment at 322-345 threads the bilayer; it reads ILILFAVFIVCWAPFTTYSLVATF. Topologically, residues 346-357 are extracellular; that stretch reads SKHFYYQHNFFE. Residues 358 to 379 traverse the membrane as a helical segment; the sequence is ISTWLLWLCYLKSALNPLIYYW. The Cytoplasmic segment spans residues 380–425; that stretch reads RIKKFHDACLDMMPKSFKFLPRLPGHTRRRIRPSAVYVCGEHRTVL.

Belongs to the G-protein coupled receptor 1 family. As to expression, brain specific.

The protein resides in the cell membrane. In terms of biological role, orphan receptor. May play a role in brain function. The sequence is that of Probable G-protein coupled receptor 63 (Gpr63) from Mus musculus (Mouse).